Here is a 344-residue protein sequence, read N- to C-terminus: Phosphoribosylformylglycinamidine cyclo-ligase (344 aa).

This sequence belongs to the AIR synthase family.

The protein resides in the cytoplasm. The enzyme catalyses 2-formamido-N(1)-(5-O-phospho-beta-D-ribosyl)acetamidine + ATP = 5-amino-1-(5-phospho-beta-D-ribosyl)imidazole + ADP + phosphate + H(+). The protein operates within purine metabolism; IMP biosynthesis via de novo pathway; 5-amino-1-(5-phospho-D-ribosyl)imidazole from N(2)-formyl-N(1)-(5-phospho-D-ribosyl)glycinamide: step 2/2. The polypeptide is Phosphoribosylformylglycinamidine cyclo-ligase (Synechococcus sp. (strain RCC307)).